Here is a 335-residue protein sequence, read N- to C-terminus: Large ribosomal subunit protein uL10 (335 aa).

Positions 306 to 335 (VEETVEEEEEEEEEEDAEEEAAAGLGALFG) are disordered. Acidic residues predominate over residues 308 to 326 (ETVEEEEEEEEEEDAEEEA).

It belongs to the universal ribosomal protein uL10 family. Part of the 50S ribosomal subunit. Forms part of the ribosomal stalk which helps the ribosome interact with GTP-bound translation factors. Forms a heptameric L10(L12)2(L12)2(L12)2 complex, where L10 forms an elongated spine to which the L12 dimers bind in a sequential fashion.

In terms of biological role, forms part of the ribosomal stalk, playing a central role in the interaction of the ribosome with GTP-bound translation factors. This is Large ribosomal subunit protein uL10 from Methanobrevibacter smithii (strain ATCC 35061 / DSM 861 / OCM 144 / PS).